The sequence spans 373 residues: tRNA-specific 2-thiouridylase MnmA (373 aa).

ATP contacts are provided by residues 12-19 and M38; that span reads GMSGGVDS. The interval 98-100 is interaction with target base in tRNA; sequence NPD. Residue C103 is the Nucleophile of the active site. The cysteines at positions 103 and 200 are disulfide-linked. Residue G127 coordinates ATP. Residues 150-152 form an interaction with tRNA region; the sequence is KDQ. C200 acts as the Cysteine persulfide intermediate in catalysis. The interval 312 to 313 is interaction with tRNA; the sequence is RY.

This sequence belongs to the MnmA/TRMU family.

The protein localises to the cytoplasm. The catalysed reaction is S-sulfanyl-L-cysteinyl-[protein] + uridine(34) in tRNA + AH2 + ATP = 2-thiouridine(34) in tRNA + L-cysteinyl-[protein] + A + AMP + diphosphate + H(+). Its function is as follows. Catalyzes the 2-thiolation of uridine at the wobble position (U34) of tRNA, leading to the formation of s(2)U34. The protein is tRNA-specific 2-thiouridylase MnmA of Streptococcus pneumoniae (strain CGSP14).